Reading from the N-terminus, the 420-residue chain is Serine palmitoyltransferase (420 aa).

Residues 134–135 (GY), His234, Thr262, and Ser264 contribute to the pyridoxal 5'-phosphate site. At Lys265 the chain carries N6-(pyridoxal phosphate)lysine.

It belongs to the class-II pyridoxal-phosphate-dependent aminotransferase family. In terms of assembly, homodimer. Pyridoxal 5'-phosphate is required as a cofactor.

Its subcellular location is the cytoplasm. It catalyses the reaction L-serine + hexadecanoyl-CoA + H(+) = 3-oxosphinganine + CO2 + CoA. It functions in the pathway lipid metabolism; sphingolipid metabolism. With respect to regulation, not inhibited by relatively high concentrations of palmitoyl-CoA. Inhibited by both D-cycloserine (DCS) and L-cycloserine (LCS), which inactivate SPT by transamination to form a free pyridoxamine 5'-phosphate (PMP) and beta-aminooxyacetaldehyde that remain bound at the active site. Inhibition is reversed by incubation with excess pyridoxal phosphate. Inhibited by the fungal natural product myriocin, which acts as a competitive inhibitor for both L-serine and palmitoyl-CoA substrates. Functionally, catalyzes the condensation of L-serine with palmitoyl-CoA (hexadecanoyl-CoA) to produce 3-oxosphinganine. Exhibits a broad substrate specificity concerning the chain length and the degree of unsaturation of acyl-CoA. In Sphingomonas paucimobilis (Pseudomonas paucimobilis), this protein is Serine palmitoyltransferase.